Here is a 288-residue protein sequence, read N- to C-terminus: 11-beta-hydroxysteroid dehydrogenase 1 (288 aa).

The Cytoplasmic portion of the chain corresponds to 1 to 4 (MKKY). The helical; Signal-anchor for type II membrane protein transmembrane segment at 5–20 (LLPVLVLCLGYYYSTN) threads the bilayer. Topologically, residues 21–288 (EEFRPEMLQG…SYNRDLFVSN (268 aa)) are lumenal. NADP(+) is bound by residues 37–63 (GASK…TARS), 88–89 (TM), and 115–117 (NHI). A glycan (N-linked (GlcNAc...) asparagine) is linked at N158. Residue S166 participates in substrate binding. Catalysis depends on Y179, which acts as the Proton acceptor. An NADP(+)-binding site is contributed by 179-183 (YSASK). N203 carries an N-linked (GlcNAc...) asparagine glycan. NADP(+) is bound by residues 212 to 218 (GFIDTET) and 214 to 218 (IDTET).

Belongs to the short-chain dehydrogenases/reductases (SDR) family. As to quaternary structure, homodimer. In terms of processing, glycosylated. In terms of tissue distribution, liver, kidney, lung and testis. Brain. Expressed in liver (at protein level).

It is found in the endoplasmic reticulum membrane. The enzyme catalyses an 11beta-hydroxysteroid + NADP(+) = an 11-oxosteroid + NADPH + H(+). It catalyses the reaction corticosterone + NADP(+) = 11-dehydrocorticosterone + NADPH + H(+). The catalysed reaction is a 7beta-hydroxysteroid + NADP(+) = a 7-oxosteroid + NADPH + H(+). It carries out the reaction 7-oxocholesterol + NADPH + H(+) = 7beta-hydroxycholesterol + NADP(+). The enzyme catalyses chenodeoxycholate + NADP(+) = 7-oxolithocholate + NADPH + H(+). It catalyses the reaction 7-oxolithocholate + NADPH + H(+) = ursodeoxycholate + NADP(+). The catalysed reaction is glycochenodeoxycholate + NADP(+) = 7-oxoglycolithocholate + NADPH + H(+). It carries out the reaction taurochenodeoxycholate + NADP(+) = 7-oxotaurolithocholate + NADPH + H(+). The enzyme catalyses tauroursodeoxycholate + NADP(+) = 7-oxotaurolithocholate + NADPH + H(+). It catalyses the reaction glycoursodeoxycholate + NADP(+) = 7-oxoglycolithocholate + NADPH + H(+). The catalysed reaction is 7-oxopregnenolone + NADPH + H(+) = 7beta-hydroxypregnenolone + NADP(+). It carries out the reaction 3beta,7alpha-dihydroxyandrost-5-en-17-one + NADP(+) = 3beta-hydroxy-5-androstene-7,17-dione + NADPH + H(+). The enzyme catalyses 3beta-hydroxy-5-androstene-7,17-dione + NADPH + H(+) = 3beta,7beta-dihydroxyandrost-5-en-17-one + NADP(+). It catalyses the reaction 3beta-hydroxy-5alpha-androstane-7,17-dione + NADPH + H(+) = 3beta,7beta-dihydroxy-5alpha-androstan-17-one + NADP(+). Its function is as follows. Controls the reversible conversion of biologically active glucocorticoids such as 11-dehydrocorticosterone to corticosterone using NADP(H). Participates in the corticosteroid receptor-mediated anti-inflammatory response, as well as metabolic and homeostatic processes. Bidirectional in vitro, predominantly functions as a reductase in vivo, thereby increasing the concentration of active glucocorticoids. It has broad substrate specificity, besides glucocorticoids, it accepts other steroid and sterol substrates. Interconverts 7-oxo- and 7-hydroxy-neurosteroids such as 7-oxopregnenolone and 7beta-hydroxypregnenolone, 7-oxodehydroepiandrosterone (3beta-hydroxy-5-androstene-7,17-dione) and 7beta-hydroxydehydroepiandrosterone (3beta,7beta-dihydroxyandrost-5-en-17-one), among others. Catalyzes the stereo-specific conversion of the major dietary oxysterol, 7-ketocholesterol (7-oxocholesterol), into the more polar 7-beta-hydroxycholesterol metabolite. 7-oxocholesterol is one of the most important oxysterols, it participates in several events such as induction of apoptosis, accumulation in atherosclerotic lesions, lipid peroxidation, and induction of foam cell formation. Mediates the 7-oxo reduction of 7-oxolithocholate mainly to chenodeoxycholate, and to a lesser extent to ursodeoxycholate, both in its free form and when conjugated to glycine or taurine, providing a link between glucocorticoid activation and bile acid metabolism. Catalyzes the synthesis of 7-beta-25-dihydroxycholesterol from 7-oxo-25-hydroxycholesterol in vitro, which acts as a ligand for the G-protein-coupled receptor (GPCR) Epstein-Barr virus-induced gene 2 (EBI2) and may thereby regulate immune cell migration. This is 11-beta-hydroxysteroid dehydrogenase 1 from Rattus norvegicus (Rat).